Reading from the N-terminus, the 984-residue chain is Detocs histidine-protein kinase DtcA (984 aa).

Position 645 is a phosphohistidine; by autocatalysis (His645).

In terms of processing, autophosphorylated.

The enzyme catalyses ATP + protein L-histidine = ADP + protein N-phospho-L-histidine.. Functionally, sensor-kinase member of the two-component regulatory system Detocs that confers resistance to bacteriophage. When the system (DtcA-DtcB-DtcC) is expressed in a susceptible E.coli (strain MG1655) it confers resistance to bacteriophages T2, T4, T5, T6 and SECphi27. Detocs inhibits T5 infection leading to growth arrest but not complete cell lysis, during SECphi27 infection leads to cell lysis. DtcA (this subunit) probably autophosphorylates upon sensing viral infection, and subsequently transfers the phosphate signal to DtcC which activates it, leading to an antiviral defense; DtcB may scavenge phosphorylation signals from accidental activation of DtcA. This is Detocs histidine-protein kinase DtcA from Vibrio alginolyticus.